The following is an 816-amino-acid chain: MNSEYNAQKIEAQAQKYWQENKSFEVSEDTSKEKYYCLSMFPYPSGSLHMGHVRNYSIGDVISRYQKMQGKNVMQPIGWDGFGLPAENAALENKVSPAKWTYENIDYMRDQLSKLGFGYDWSREIATCHQKYYRWEQWLFIKLFEKDLVYKKNAIVNWDPVDQTVLANEQVIDGRGWRSNALIEKKKISQWFMRITNYADELIYGLDKLDGWPDAVKTMQKNWIGKSVGLEVDFPRHNADSIKVYTTRPDTLMGVTYLVISSEHPIALEAGKNNPQVQAFIDECKTIQITKETMKTIDKKGIDLGVKCIHPITSDDVPIWIANFVLIGYGTGAVMSVPAHDKRDYEFAKKYGIAIKKVINENISIDKNAMTDKGVLFNSGEFNGLNFDQAFNEIAKTLTDKNLGRKKTNYRLQDWGISRQRYWGCPIPIINCQNCGIVVVPEADLPVVLPEVMSFDSVGSLIKKMPEFYQTTCPKCGKMAQQETDTLDTFFESSWYFARYTCKDNNDKMLDKRANYWLANGGVDQYIGGIEHAILHLLYARFFNKLLRDEGFIKNDEPFKNLLTQGMVLKDGAKMSKSKGNTVDPAQMIEKYGADTVRLFILFAAPPTQNLEWSDSGLEGVHRFINKVYRLIMDFIQDHKSHAIGTLNNFDKAQKDIRLKTHQTLSKITDNMSRRYLFNTVIAALMKLCNTLSKFNDTSKTSMAIRQESIHILLKTLSPIAPHLCHYLWKKLGNIKAIINEPWPNVDKSALVQDKMQIIVQVNGKLRTKLMFSTDVDNAQIEAQTLANENITKFTKGKIIVKVIIVPNKLVNIVVK.

The 'HIGH' region motif lies at 42-52 (PYPSGSLHMGH). Residues 574–578 (KMSKS) carry the 'KMSKS' region motif. K577 serves as a coordination point for ATP.

Belongs to the class-I aminoacyl-tRNA synthetase family.

It is found in the cytoplasm. It catalyses the reaction tRNA(Leu) + L-leucine + ATP = L-leucyl-tRNA(Leu) + AMP + diphosphate. In Ruthia magnifica subsp. Calyptogena magnifica, this protein is Leucine--tRNA ligase.